Consider the following 1619-residue polypeptide: ATP-dependent helicase ULS1 (1619 aa).

Positions 7 to 10 (IDLT) match the SUMO interacting motif; type a 1 motif. The span at 86-102 (STFNNEKSSNEVKQQQV) shows a compositional bias: polar residues. Disordered stretches follow at residues 86 to 123 (STFNNEKSSNEVKQQQVLKEETMGSSNDEKKTQESSPS), 200 to 279 (NNKP…VESS), 347 to 371 (PILPSKNMDHTTHNSHDSEQKNSSI), and 429 to 450 (SGSNSIPTSETDAQSSSSSVLQ). The span at 103–118 (LKEETMGSSNDEKKTQ) shows a compositional bias: basic and acidic residues. Serine 121 carries the post-translational modification Phosphoserine. Positions 200 to 210 (NNKPSQQQFSD) are enriched in polar residues. A compositionally biased stretch (basic and acidic residues) spans 211 to 226 (PETKDNSLKSENKDQI). Composition is skewed to polar residues over residues 242–259 (SAFQDSETQNNSKNTIPN) and 269–279 (LPSNLSSVESS). The segment covering 353–366 (NMDHTTHNSHDSEQ) has biased composition (basic and acidic residues). Residues 371–378 (IIILSDED) carry the SUMO interacting motif; type b 1 motif. The SUMO interacting motif; type a 2 motif lies at 470-473 (LDTL). Positions 543 to 550 (ILVDEAEN) match the SUMO interacting motif; type b 2 motif. Positions 956–1157 (QVENSAKKGG…YSLIRFLRIP (202 aa)) constitute a Helicase ATP-binding domain. 969–976 (DDMGLGKT) lines the ATP pocket. The RING-type zinc finger occupies 1330-1386 (CFWCMEQLEPEAMSVLTGCGHLICDTCIEPFIEESSMLPQAKKTKGGAFAIPCKDCQ). Positions 1447–1606 (QCIQVIQRVF…GKIKEVNSLG (160 aa)) constitute a Helicase C-terminal domain.

This sequence belongs to the SNF2/RAD54 helicase family. As to quaternary structure, interacts with CDC3, CDC11, EBP2, SIR4, UBC4 and SUMO/SMT3.

Its subcellular location is the nucleus. Its function is as follows. ATP-dependent helicase involved mating type switching and in silencing interference through its interaction with the silencing regulator SIR4. Cooperates with UBC4 and UBC5 to mediate ubiquitination of SUMO conjugates. The chain is ATP-dependent helicase ULS1 (ULS1) from Saccharomyces cerevisiae (strain ATCC 204508 / S288c) (Baker's yeast).